The following is a 195-amino-acid chain: Probable nicotinate-nucleotide adenylyltransferase (195 aa).

The protein belongs to the NadD family.

It catalyses the reaction nicotinate beta-D-ribonucleotide + ATP + H(+) = deamido-NAD(+) + diphosphate. It functions in the pathway cofactor biosynthesis; NAD(+) biosynthesis; deamido-NAD(+) from nicotinate D-ribonucleotide: step 1/1. Its function is as follows. Catalyzes the reversible adenylation of nicotinate mononucleotide (NaMN) to nicotinic acid adenine dinucleotide (NaAD). The protein is Probable nicotinate-nucleotide adenylyltransferase of Salinibacter ruber (strain DSM 13855 / M31).